Consider the following 721-residue polypeptide: Sodium/hydrogen exchanger 6 (721 aa).

A disordered region spans residues 1–44 (MTSPKPWARSAGSCQTQRAVRTRKKECREEGESDTEKGPAASSA). Basic and acidic residues predominate over residues 26-37 (ECREEGESDTEK). Transmembrane regions (helical) follow at residues 91–111 (SANL…IWLF), 123–143 (GLAM…IHVP), 196–216 (VTFD…FYAG), 231–251 (ILAY…SIMY), 272–292 (CLLF…AIFH), 298–318 (VELY…AIVL), 344–364 (IGIF…TGVV), 388–412 (MSWS…FCGI), 434–454 (FELL…LTLF), 456–476 (FQNH…IFLG), 499–519 (NFQH…ALAI), and 535–555 (LLIV…MLSC).

This sequence belongs to the monovalent cation:proton antiporter 1 (CPA1) transporter (TC 2.A.36) family. In terms of assembly, homodimer. Interacts with RACK1; regulates the distribution of SLC9A6 between endosomes and the plasma membrane. In terms of processing, ubiquitinated (in vitro). Post-translationally, glycosylated.

The protein localises to the endosome membrane. The protein resides in the recycling endosome membrane. It is found in the early endosome membrane. Its subcellular location is the late endosome membrane. It localises to the cell membrane. It catalyses the reaction Na(+)(in) + H(+)(out) = Na(+)(out) + H(+)(in). It carries out the reaction K(+)(in) + H(+)(out) = K(+)(out) + H(+)(in). Endosomal Na(+), K(+)/H(+) antiporter. Mediates the electroneutral exchange of endosomal luminal H(+) for a cytosolic Na(+) or K(+). By facilitating proton efflux, SLC9A6 counteracts the acidity generated by vacuolar (V)-ATPase, thereby limiting luminal acidification. Responsible for alkalizing and maintaining the endosomal pH, and consequently in, e.g., endosome maturation and trafficking of recycling endosomal cargo. Plays a critical role during neurodevelopment by regulating synaptic development and plasticity. Implicated in the maintenance of cell polarity in a manner that is dependent on its ability to modulate intravesicular pH. Regulates intracelular pH in some specialized cells, osteoclasts and stereocilia where this transporter localizes to the plasma membrane. In Rattus norvegicus (Rat), this protein is Sodium/hydrogen exchanger 6.